The primary structure comprises 86 residues: Large ribosomal subunit protein uL23 (86 aa).

This sequence belongs to the universal ribosomal protein uL23 family. In terms of assembly, part of the 50S ribosomal subunit. Contacts protein L29.

Binds to 23S rRNA. One of the proteins that surrounds the polypeptide exit tunnel on the outside of the ribosome. This is Large ribosomal subunit protein uL23 from Methanococcus vannielii (strain ATCC 35089 / DSM 1224 / JCM 13029 / OCM 148 / SB).